Consider the following 318-residue polypeptide: MAVVAVAGGTGGKGVPGAANEPRRYAVDYDNVEEMRNVLKENNVEVVVSALLLSDESVAKSQINLIRAAAESGTVTKFIPSEYYIDFHSPIPGSDLFTNFQIEAEEELMRHPQLTWTLIRVGIFLDHLTMPFNPKPTYITPYWVFVDIEHEECVFPGDGSQPLVLSHSTDLAAYIECLVGLPSNEWPRESLVASNKIQVKDLQDLIKKTTGTLCGHLGICIRTFLILAIGREFKVTYDSVESIQKGQITPLTSNRPVFDDPQKGKLFQEVEVQVMLSMLSNAHDLPGKNLAELFPEVHVTNIEDFLRAGWEMKQGLKP.

Belongs to the NmrA-type oxidoreductase family. Isoflavone reductase subfamily.

The protein operates within mycotoxin biosynthesis. Functionally, aminotransferase; part of the gene cluster that mediates the biosynthesis of swainsonine (SW), a cytotoxic fungal alkaloid and a potential cancer therapy drug. Swainsonine production occurs via a multibranched pathway and is dispensable for fungal colonization of plants and infection of insect hosts. The first step of swainsonine biosynthesis is the production of the precursor pipecolic acid (PA) via conversion of L-lysine (Lys) to 1-piperideine-6-carboxylate (P6C) by the aminotransferase swnA, the latter being further reduced to PA by the reductase swnR. The PKS-NRPS hybrid synthetase swnK uptakes and condensates PA and malonyl-CoA with and without skipping of the ketoreductase (KR) domain in order to produce 3 intermediates, 1-oxoindolizidine, (1S)-1-hydroxyindolizin, and (1R)-1-hydroxyindolizine; with the transisomer (1S)-1-hydroxyindolizin being predominant. The terminal thioester reductase (TE) domain of swnK is involved in reduction of the thioester bond to release the intermediate aldehydes. The oxidoreductase swnN could contribute to the reduction of 1-oxoindolizidine to (1S)-1-hydroxyindolizin and (1R)-1-hydroxyindolizine, contributing to the major route of SW production. The dioxygenase swnH2 would be responsible for the oxidization of (1R)-1-hydroxyindolizine into (1R,2S)-1,2-dihydroxyindolizine and of (1S)-1-hydroxyindolizin to yield both (1R,2S)-1,2-dihydroxyindolizine and (1S,2S)-1,2-dihydroxyindolizine. The dioxygenase swnH1 then performs the conversion of the 1,2-dihydroxyindolizine epimers to SW. This chain is Oxidoreductase swnN, found in Arthroderma benhamiae (strain ATCC MYA-4681 / CBS 112371) (Trichophyton mentagrophytes).